The primary structure comprises 165 residues: Crossover junction endodeoxyribonuclease RuvC (165 aa).

Catalysis depends on residues aspartate 7, glutamate 68, and histidine 142. Residues aspartate 7, glutamate 68, and histidine 142 each contribute to the Mg(2+) site.

The protein belongs to the RuvC family. As to quaternary structure, homodimer which binds Holliday junction (HJ) DNA. The HJ becomes 2-fold symmetrical on binding to RuvC with unstacked arms; it has a different conformation from HJ DNA in complex with RuvA. In the full resolvosome a probable DNA-RuvA(4)-RuvB(12)-RuvC(2) complex forms which resolves the HJ. It depends on Mg(2+) as a cofactor.

Its subcellular location is the cytoplasm. The enzyme catalyses Endonucleolytic cleavage at a junction such as a reciprocal single-stranded crossover between two homologous DNA duplexes (Holliday junction).. The RuvA-RuvB-RuvC complex processes Holliday junction (HJ) DNA during genetic recombination and DNA repair. Endonuclease that resolves HJ intermediates. Cleaves cruciform DNA by making single-stranded nicks across the HJ at symmetrical positions within the homologous arms, yielding a 5'-phosphate and a 3'-hydroxyl group; requires a central core of homology in the junction. The consensus cleavage sequence is 5'-(A/T)TT(C/G)-3'. Cleavage occurs on the 3'-side of the TT dinucleotide at the point of strand exchange. HJ branch migration catalyzed by RuvA-RuvB allows RuvC to scan DNA until it finds its consensus sequence, where it cleaves and resolves the cruciform DNA. The sequence is that of Crossover junction endodeoxyribonuclease RuvC from Anaplasma marginale (strain Florida).